The sequence spans 174 residues: UPF0398 protein llmg_0513 (174 aa).

It belongs to the UPF0398 family.

This is UPF0398 protein llmg_0513 from Lactococcus lactis subsp. cremoris (strain MG1363).